A 176-amino-acid polypeptide reads, in one-letter code: Probable DNA-directed RNA polymerase subunit delta (176 aa).

One can recognise an HTH HARE-type domain in the interval L14–W81. 2 disordered regions span residues V91–D119 and D140–K176. Composition is skewed to acidic residues over residues D105–D119 and T159–K176.

It belongs to the RpoE family. As to quaternary structure, RNAP is composed of a core of 2 alpha, a beta and a beta' subunits. The core is associated with a delta subunit and one of several sigma factors.

Functionally, participates in both the initiation and recycling phases of transcription. In the presence of the delta subunit, RNAP displays an increased specificity of transcription, a decreased affinity for nucleic acids, and an increased efficiency of RNA synthesis because of enhanced recycling. The sequence is that of Probable DNA-directed RNA polymerase subunit delta from Listeria welshimeri serovar 6b (strain ATCC 35897 / DSM 20650 / CCUG 15529 / CIP 8149 / NCTC 11857 / SLCC 5334 / V8).